The following is a 294-amino-acid chain: Acetylglutamate kinase (294 aa).

Residues 63-64 (GG), Arg85, and Asn188 contribute to the substrate site.

It belongs to the acetylglutamate kinase family. ArgB subfamily.

It localises to the cytoplasm. The catalysed reaction is N-acetyl-L-glutamate + ATP = N-acetyl-L-glutamyl 5-phosphate + ADP. The protein operates within amino-acid biosynthesis; L-arginine biosynthesis; N(2)-acetyl-L-ornithine from L-glutamate: step 2/4. In terms of biological role, catalyzes the ATP-dependent phosphorylation of N-acetyl-L-glutamate. This Methanococcus maripaludis (strain C6 / ATCC BAA-1332) protein is Acetylglutamate kinase.